We begin with the raw amino-acid sequence, 787 residues long: PAN2-PAN3 deadenylation complex subunit pan3 (787 aa).

Residues methionine 1–glycine 20 are disordered. The span at proline 11–glycine 20 shows a compositional bias: low complexity. The segment at glycine 23 to glutamine 51 adopts a C3H1-type zinc-finger fold. 3 disordered regions span residues glutamate 131–aspartate 162, threonine 179–serine 210, and glycine 226–threonine 291. Composition is skewed to low complexity over residues asparagine 143–serine 154 and serine 200–serine 210. The short motif at lysine 185 to serine 200 is the PABPC-interacting motif-2 (PAM-2) element. Residues threonine 265–serine 290 show a composition bias toward polar residues. The pseudokinase domain stretch occupies residues glutamine 365–glycine 650. ATP contacts are provided by residues arginine 422, aspartate 471–threonine 478, and threonine 545–lysine 546. Residues alanine 651–threonine 689 are a coiled coil. A knob domain region spans residues isoleucine 690–leucine 787.

It belongs to the protein kinase superfamily. PAN3 family. In terms of assembly, homodimer. Forms a heterotrimer with a catalytic subunit pan2 to form the poly(A)-nuclease (PAN) deadenylation complex. Interacts (via PAM-2 motif) with poly(A)-binding protein pabpc1 (via PABC domain), conferring substrate specificity of the enzyme complex. Interacts with the GW182 family proteins tnrc6a, tnrc6b and tnrc6c.

It localises to the cytoplasm. The protein resides in the P-body. Its function is as follows. Regulatory subunit of the poly(A)-nuclease (PAN) deadenylation complex, one of two cytoplasmic mRNA deadenylases involved in general and miRNA-mediated mRNA turnover. PAN specifically shortens poly(A) tails of RNA and the activity is stimulated by poly(A)-binding protein (PABP). PAN deadenylation is followed by rapid degradation of the shortened mRNA tails by the CCR4-NOT complex. Deadenylated mRNAs are then degraded by two alternative mechanisms, namely exosome-mediated 3'-5' exonucleolytic degradation, or deadenylation-dependent mRNA decaping and subsequent 5'-3' exonucleolytic degradation by XRN1. PAN3 acts as a positive regulator for PAN activity, recruiting the catalytic subunit PAN2 to mRNA via its interaction with RNA and PABP, and to miRNA targets via its interaction with GW182 family proteins. The polypeptide is PAN2-PAN3 deadenylation complex subunit pan3 (Xenopus tropicalis (Western clawed frog)).